The chain runs to 749 residues: cGMP-dependent protein kinase egl-4 (749 aa).

Positions 30 to 96 (EAHELQKLIP…LEQKAQSAAS (67 aa)) form a coiled coil. Residues 87 to 111 (LEQKAQSAASPGQPPSPSPRTDQLG) are disordered. 3',5'-cyclic GMP contacts are provided by residues 234 to 237 (GELA), 244 to 245 (RT), Arg-349, 358 to 361 (GERA), 368 to 369 (RT), and Tyr-403. A Protein kinase domain is found at 438-698 (VKRLATLGVG…VNDIRKHRWF (261 aa)). ATP contacts are provided by residues 444–452 (LGVGGFGRV) and Lys-468. The short motif at 461–473 (KSKTYALKALKKK) is the Nuclear localization signal element. Asp-562 functions as the Proton acceptor in the catalytic mechanism. The region spanning 699 to 749 (MGFDWEGLRTKTLKPPILPKVNNPADVTNFDNYPPDNDVPPDEFSGWDEGF) is the AGC-kinase C-terminal domain. A disordered region spans residues 723 to 749 (ADVTNFDNYPPDNDVPPDEFSGWDEGF).

Belongs to the protein kinase superfamily. AGC Ser/Thr protein kinase family. cGMP subfamily. Mg(2+) serves as cofactor. Autophosphorylated.

The protein localises to the cytoplasm. Its subcellular location is the nucleus. It catalyses the reaction L-seryl-[protein] + ATP = O-phospho-L-seryl-[protein] + ADP + H(+). It carries out the reaction L-threonyl-[protein] + ATP = O-phospho-L-threonyl-[protein] + ADP + H(+). With respect to regulation, binding of cGMP results in enzyme activation. In terms of biological role, promotes chemoreceptor gene expression in response to increased cGMP levels by antagonizing the gene repression functions of the class II HDAC hda-4 and the mef-2 transcription factor. Regulates gene expression via recruitment of a histone deacetylase complex containing hda-2, saeg-1 and saeg-2. Represses body size and lifespan through the dbl-1 and insulin pathways, respectively. May also signal through daf-3 and/or daf-5. Role in egg-laying, dauer formation and motility. Regulates behavioral responses to various chemosensory stimuli in sensory neurons. Required for the initiation of long term adaptation to prolonged odor exposure which results in a decrease in odor seeking behavior. May regulate this process by phosphorylating tax-2, a subunit of cyclic nucleotide-gated channel tax-2/tax-4. In ASH sensory neurons, negatively regulates avoidance behavior to some bitter tastants, such as quinine, probably by phosphorylating rgs-2 and rgs-3 which are 2 regulator of G-protein signaling proteins. In AWB sensory neurons, involved in avoidance behavior to some repellent odors. In ASE left (ASEL) sensory neuron, involved in the sensing of environmental alkalinity downstream of receptor-type guanylate cyclase gcy-14. In sensory neurons, involved in the signaling pathway downstream of insulin, TGF-beta and receptor-type guanylate cyclase responsible for inducing quiescence after food intake. Might play a role in aversive olfactory learning in AWC neurons when an odor is associated with food deprivation, depending on the ins-1/age-1 signal from the AIA to the AWC neurons. Probably by regulating neuronal transmission downstream of lin-3 and receptor lin-23 and phospholipase plc-3 in ALA neurons, involved in the decrease in locomotion during the quiescent state that precedes each larval molt. The chain is cGMP-dependent protein kinase egl-4 from Caenorhabditis briggsae.